The chain runs to 337 residues: Outer membrane protein U (337 aa).

Positions 1 to 21 (MKKTLIALSVSAAAMATGVNA) are cleaved as a signal peptide.

This sequence belongs to the Gram-negative porin family. Homotrimer.

The protein resides in the cell outer membrane. Forms pores that allow passive diffusion of small molecules across the outer membrane. This Vibrio parahaemolyticus serotype O3:K6 (strain RIMD 2210633) protein is Outer membrane protein U (ompU).